We begin with the raw amino-acid sequence, 359 residues long: 3-dehydroquinate synthase (359 aa).

Residues 71 to 76 (DGEQYK), 105 to 109 (GVIGD), 129 to 130 (TT), lysine 142, lysine 151, and 169 to 172 (CLAT) each bind NAD(+). Positions 184, 247, and 264 each coordinate Zn(2+).

This sequence belongs to the sugar phosphate cyclases superfamily. Dehydroquinate synthase family. It depends on Co(2+) as a cofactor. Zn(2+) is required as a cofactor. Requires NAD(+) as cofactor.

The protein resides in the cytoplasm. It catalyses the reaction 7-phospho-2-dehydro-3-deoxy-D-arabino-heptonate = 3-dehydroquinate + phosphate. It participates in metabolic intermediate biosynthesis; chorismate biosynthesis; chorismate from D-erythrose 4-phosphate and phosphoenolpyruvate: step 2/7. Its function is as follows. Catalyzes the conversion of 3-deoxy-D-arabino-heptulosonate 7-phosphate (DAHP) to dehydroquinate (DHQ). This is 3-dehydroquinate synthase from Baumannia cicadellinicola subsp. Homalodisca coagulata.